Reading from the N-terminus, the 167-residue chain is UPF0225 protein VV1358 (167 aa).

It belongs to the UPF0225 family.

The polypeptide is UPF0225 protein VV1358 (Vibrio vulnificus (strain YJ016)).